The chain runs to 414 residues: Ribulose bisphosphate carboxylase large chain (414 aa).

The substrate site is built by Asn-101 and Thr-151. Lys-153 functions as the Proton acceptor in the catalytic mechanism. Residue Lys-155 coordinates substrate. Residues Lys-179, Asp-181, and Glu-182 each contribute to the Mg(2+) site. An N6-carboxylysine modification is found at Lys-179. The Proton acceptor role is filled by His-272. Substrate contacts are provided by Arg-273, His-305, and Ser-357.

This sequence belongs to the RuBisCO large chain family. Type I subfamily. Heterohexadecamer of 8 large chains and 8 small chains; disulfide-linked. The disulfide link is formed within the large subunit homodimers. Requires Mg(2+) as cofactor. The disulfide bond which can form in the large chain dimeric partners within the hexadecamer appears to be associated with oxidative stress and protein turnover.

It localises to the plastid. Its subcellular location is the chloroplast. It catalyses the reaction 2 (2R)-3-phosphoglycerate + 2 H(+) = D-ribulose 1,5-bisphosphate + CO2 + H2O. The catalysed reaction is D-ribulose 1,5-bisphosphate + O2 = 2-phosphoglycolate + (2R)-3-phosphoglycerate + 2 H(+). RuBisCO catalyzes two reactions: the carboxylation of D-ribulose 1,5-bisphosphate, the primary event in carbon dioxide fixation, as well as the oxidative fragmentation of the pentose substrate in the photorespiration process. Both reactions occur simultaneously and in competition at the same active site. The polypeptide is Ribulose bisphosphate carboxylase large chain (rbcL) (Onychium japonicum (Japanese claw fern)).